A 353-amino-acid chain; its full sequence is tRNA-specific 2-thiouridylase MnmA (353 aa).

ATP contacts are provided by residues 6–13 (GMSGGVDS) and L32. Catalysis depends on C99, which acts as the Nucleophile. A disulfide bond links C99 and C197. Residue G124 coordinates ATP. The tract at residues 147-149 (KDQ) is interaction with tRNA. C197 functions as the Cysteine persulfide intermediate in the catalytic mechanism. The interval 303-304 (RY) is interaction with tRNA.

This sequence belongs to the MnmA/TRMU family.

The protein resides in the cytoplasm. The enzyme catalyses S-sulfanyl-L-cysteinyl-[protein] + uridine(34) in tRNA + AH2 + ATP = 2-thiouridine(34) in tRNA + L-cysteinyl-[protein] + A + AMP + diphosphate + H(+). Functionally, catalyzes the 2-thiolation of uridine at the wobble position (U34) of tRNA, leading to the formation of s(2)U34. This chain is tRNA-specific 2-thiouridylase MnmA, found in Persephonella marina (strain DSM 14350 / EX-H1).